Reading from the N-terminus, the 899-residue chain is CNK3/IPCEF1 fusion protein (899 aa).

Residues 7–72 (WSPKQVVDWT…LEAVDLLCAL (66 aa)) enclose the SAM domain. A CRIC domain is found at 80 to 174 (NMKNLVLKLR…TTVQKDCFVA (95 aa)). In terms of domain architecture, PDZ spans 211-293 (EVHLPNIKPG…GVVLLLKKRP (83 aa)). Disordered stretches follow at residues 309 to 334 (WKPP…DTSL) and 347 to 390 (PPPP…FLDQ). The DUF1170 domain maps to 332-457 (TSLKKEKSAI…ARPRGHGRKA (126 aa)). Ser383 bears the Phosphoserine mark. In terms of domain architecture, PH spans 503-602 (HADCQGWLYK…WLNKLGSAVI (100 aa)). Disordered stretches follow at residues 605–687 (ESTT…PDTV), 735–770 (LSSD…TKVS), and 868–899 (QQQR…ENSI). A compositionally biased stretch (acidic residues) spans 613-624 (CYSESEQEDPEI). The segment covering 634–662 (ASQTQSLTAQQASSSSPSLSGTSYSFSSL) has biased composition (low complexity). Residues 663-676 (ENTVKTPSSFPSSL) are compositionally biased toward polar residues. Low complexity predominate over residues 735-745 (LSSDDTSSLSS). A compositionally biased stretch (basic and acidic residues) spans 761 to 770 (IMDKEETKVS). The interval 851-899 (KYREWKVMNTLLIQDIYQQQRASPAPDDTDDTPQELKKSPSSPSVENSI) is required for interaction with CYTH2. Ser873 carries the post-translational modification Phosphoserine. Residues 889 to 899 (SPSSPSVENSI) are compositionally biased toward polar residues.

This sequence belongs to the CNKSR family.

Required for hepatocyte growth factor (HGF)-dependent activation of Arf6 and HGF-stimulated cell migration. This is CNK3/IPCEF1 fusion protein (CNK3/IPCEF1) from Homo sapiens (Human).